A 1394-amino-acid polypeptide reads, in one-letter code: ABC transporter patM (1394 aa).

A disordered region spans residues 1-41 (MVDNYHSSLDVAKTPIQSDADAQKSEAETEGPSSKSSQIAA). The ABC transporter 1 domain occupies 98–341 (SPLQNRQRKQ…FEDLGFECLS (244 aa)). A run of 6 helical transmembrane segments spans residues 437 to 457 (SLWA…GTLF), 467 to 487 (LFIF…QSMA), 511 to 531 (IAYA…AICY), 546 to 566 (GNFF…SMFF), 579 to 599 (AVLP…LYVP), and 688 to 708 (VGIN…GMEM). The segment at 727-755 (VTHRRDKIDSETGQDQGNESSEMSAGQSN) is disordered. The segment covering 737–755 (ETGQDQGNESSEMSAGQSN) has biased composition (polar residues). In terms of domain architecture, ABC transporter 2 spans 767–1013 (DKSHNLAWTN…EAIQYFQPRS (247 aa)). An ATP-binding site is contributed by 808-815 (GVSGAGKT). The next 6 membrane-spanning stretches (helical) occupy residues 1131–1151 (GAYN…PLGL), 1177–1197 (LAFV…SSLV), 1219–1239 (FLMY…CASL), 1245–1265 (AAFA…GTLS), 1280–1300 (ISPL…DLPI), and 1368–1388 (IGVF…MTYL).

This sequence belongs to the ABC transporter superfamily. ABCG family. PDR (TC 3.A.1.205) subfamily.

The protein resides in the vacuole membrane. The protein localises to the cell membrane. Its pathway is mycotoxin biosynthesis; patulin biosynthesis. ABC transporter; part of the gene cluster that mediates the biosynthesis of patulin, an acetate-derived tetraketide mycotoxin produced by several fungal species that shows antimicrobial properties against several bacteria. May be involved in the secretion of E-ascladiol to be converted to patulin by the secreted patulin synthase patE. This Penicillium expansum (Blue mold rot fungus) protein is ABC transporter patM.